The following is a 60-amino-acid chain: Large ribosomal subunit protein uL30 (60 aa).

Belongs to the universal ribosomal protein uL30 family. Part of the 50S ribosomal subunit.

The polypeptide is Large ribosomal subunit protein uL30 (Shewanella denitrificans (strain OS217 / ATCC BAA-1090 / DSM 15013)).